A 350-amino-acid polypeptide reads, in one-letter code: MQRSLDSLAGMATSAFGAGTSAAMRQATSPKTILEYIINFFTCGGIRRRNETQYQELIETMAETLKSTMPDRGAPLPENIILDDMDGCRVEFNLPGENNEAGQVIVRVSKGDHSETREIPLVSFEKICRALLFRCEFSLPQDSVILTAQGGMNLKGAVLTGANLTAENLCDADLSGANLEGAVLFMADCEGANFKGANLSGTSLGDSNFKNACLEDGIMCGATLDHANLTGANLQHASLLGCSMIECNCSGANMDHTNLSGATLIRADMSGATLQGATIMAAIMEDAVLTRANLRKASFISTNLDGADLAEANLNNTCFKDCTLTHLRTEDATMSTSTQTLFNEFYSENI.

Pentapeptide repeat domains are found at residues 162–201 (ANLTAENLCDADLSGANLEGAVLFMADCEGANFKGANLSG), 202–241 (TSLGDSNFKNACLEDGIMCGATLDHANLTGANLQHASLLG), 247–286 (CNCSGANMDHTNLSGATLIRADMSGATLQGATIMAAIMED), and 287–326 (AVLTRANLRKASFISTNLDGADLAEANLNNTCFKDCTLTH).

As to quaternary structure, interacts with the host kinesin light chain (KLC), a subunit of the kinesin-1 motor complex.

It is found in the secreted. Its subcellular location is the host membrane. Effector proteins function to alter host cell physiology and promote bacterial survival in host tissues. Involved in the reorganization of late endosome/lysosome (LE/Lys) compartments in mammalian cells. Necessary and sufficient to link kinesin-1 onto the Salmonella-containing vacuole (SCV) membrane. Required for centrifugal extension of lysosomal glycoprotein-rich membrane tubules, known as Salmonella-induced filaments (Sifs), away from the SCV and toward the cell periphery. Required for virulence, but not for intracellular survival and replication in phagocytic cells. The chain is Secreted effector protein PipB2 (pipB2) from Salmonella paratyphi A (strain ATCC 9150 / SARB42).